The chain runs to 121 residues: MARILGVEVPDNKALFVGLTYIYGIGRKTALDILNNLEIDPNKRAKELTDDEISRLSHHINENYKVEGELRQEINKNIKRLIDIGSYRGKRHKAGLPVRGQKTHSNARTRKGPRLTKIKKR.

Positions 92 to 121 are disordered; that stretch reads HKAGLPVRGQKTHSNARTRKGPRLTKIKKR. Over residues 101 to 121 the composition is skewed to basic residues; sequence QKTHSNARTRKGPRLTKIKKR.

This sequence belongs to the universal ribosomal protein uS13 family. As to quaternary structure, part of the 30S ribosomal subunit. Forms a loose heterodimer with protein S19. Forms two bridges to the 50S subunit in the 70S ribosome.

In terms of biological role, located at the top of the head of the 30S subunit, it contacts several helices of the 16S rRNA. In the 70S ribosome it contacts the 23S rRNA (bridge B1a) and protein L5 of the 50S subunit (bridge B1b), connecting the 2 subunits; these bridges are implicated in subunit movement. Contacts the tRNAs in the A and P-sites. The chain is Small ribosomal subunit protein uS13 from Petrotoga mobilis (strain DSM 10674 / SJ95).